The sequence spans 386 residues: Succinate--CoA ligase [ADP-forming] subunit beta (386 aa).

Residues 9 to 244 (KAVLRSYGVS…LDEEDSKEIE (236 aa)) form the ATP-grasp domain. Residues Lys46, 53–55 (GRG), Glu99, Cys102, and Glu107 contribute to the ATP site. Mg(2+)-binding residues include Asn199 and Asp213. Substrate contacts are provided by residues Asn264 and 321–323 (GIM).

Belongs to the succinate/malate CoA ligase beta subunit family. In terms of assembly, heterotetramer of two alpha and two beta subunits. Mg(2+) serves as cofactor.

The catalysed reaction is succinate + ATP + CoA = succinyl-CoA + ADP + phosphate. It carries out the reaction GTP + succinate + CoA = succinyl-CoA + GDP + phosphate. It functions in the pathway carbohydrate metabolism; tricarboxylic acid cycle; succinate from succinyl-CoA (ligase route): step 1/1. Succinyl-CoA synthetase functions in the citric acid cycle (TCA), coupling the hydrolysis of succinyl-CoA to the synthesis of either ATP or GTP and thus represents the only step of substrate-level phosphorylation in the TCA. The beta subunit provides nucleotide specificity of the enzyme and binds the substrate succinate, while the binding sites for coenzyme A and phosphate are found in the alpha subunit. The sequence is that of Succinate--CoA ligase [ADP-forming] subunit beta from Bacillus cereus (strain B4264).